The following is a 245-amino-acid chain: 4-hydroxy-tetrahydrodipicolinate reductase (245 aa).

NAD(+) is bound by residues 7 to 12 (GAKGKV), 75 to 77 (GTT), and 102 to 105 (APNF). The active-site Proton donor/acceptor is the His132. His133 provides a ligand contact to (S)-2,3,4,5-tetrahydrodipicolinate. Lys136 functions as the Proton donor in the catalytic mechanism. 142-143 (GT) provides a ligand contact to (S)-2,3,4,5-tetrahydrodipicolinate.

It belongs to the DapB family.

It is found in the cytoplasm. It carries out the reaction (S)-2,3,4,5-tetrahydrodipicolinate + NAD(+) + H2O = (2S,4S)-4-hydroxy-2,3,4,5-tetrahydrodipicolinate + NADH + H(+). It catalyses the reaction (S)-2,3,4,5-tetrahydrodipicolinate + NADP(+) + H2O = (2S,4S)-4-hydroxy-2,3,4,5-tetrahydrodipicolinate + NADPH + H(+). The protein operates within amino-acid biosynthesis; L-lysine biosynthesis via DAP pathway; (S)-tetrahydrodipicolinate from L-aspartate: step 4/4. Its function is as follows. Catalyzes the conversion of 4-hydroxy-tetrahydrodipicolinate (HTPA) to tetrahydrodipicolinate. The sequence is that of 4-hydroxy-tetrahydrodipicolinate reductase from Mycobacterium marinum (strain ATCC BAA-535 / M).